Consider the following 95-residue polypeptide: Cobalt transport protein CbiN (95 aa).

Transmembrane regions (helical) follow at residues 7-27 (IMLIAVAVIAIAPLVIYSGLG) and 67-87 (LLFALQAAIGALIIGYVFGYY).

It belongs to the CbiN family. Forms an energy-coupling factor (ECF) transporter complex composed of an ATP-binding protein (A component, CbiO), a transmembrane protein (T component, CbiQ) and 2 possible substrate-capture proteins (S components, CbiM and CbiN) of unknown stoichimetry.

It localises to the cell membrane. Its pathway is cofactor biosynthesis; adenosylcobalamin biosynthesis. Its function is as follows. Part of the energy-coupling factor (ECF) transporter complex CbiMNOQ involved in cobalt import. This chain is Cobalt transport protein CbiN, found in Methanothermobacter marburgensis (strain ATCC BAA-927 / DSM 2133 / JCM 14651 / NBRC 100331 / OCM 82 / Marburg) (Methanobacterium thermoautotrophicum).